The primary structure comprises 49 residues: Agglutinin-1 (49 aa).

Homooligomer. Post-translationally, glycosylated.

Its function is as follows. Beta-galactoside specific lectin. Has a hemagglutinating activity on erythrocytes. The chain is Agglutinin-1 from Pomacea flagellata (Apple snail).